Reading from the N-terminus, the 223-residue chain is uncharacterized protein (223 aa).

An N-terminal signal peptide occupies residues 1-17; that stretch reads MLGQGLIFISLAFVAHA. N-linked (GlcNAc...) asparagine glycosylation occurs at asparagine 58. The disordered stretch occupies residues 149-188; sequence VRKKGSRPSKPQKEKQGNKQGSKTEESPNVDEDELESEPE. The span at 159–174 shows a compositional bias: basic and acidic residues; the sequence is PQKEKQGNKQGSKTEE. A compositionally biased stretch (acidic residues) spans 176 to 187; it reads PNVDEDELESEP. The helical transmembrane segment at 191–211 threads the bilayer; that stretch reads TFFQKYGLYLIPILFLIIMSG.

The protein localises to the endoplasmic reticulum membrane. This is an uncharacterized protein from Schizosaccharomyces pombe (strain 972 / ATCC 24843) (Fission yeast).